A 139-amino-acid polypeptide reads, in one-letter code: GATA transcription factor 16 (139 aa).

The GATA-type zinc-finger motif lies at 32–86 (NDKKKTCADCGTSKTPLWRGGPVGPKSLCNACGIRNRKKRRGGTEDNKKLKKSSS). Residues 67–98 (NRKKRRGGTEDNKKLKKSSSGGGNRKFGESLK) are disordered.

Belongs to the type IV zinc-finger family. Class B subfamily.

The protein localises to the nucleus. Functionally, transcriptional regulator that specifically binds 5'-GATA-3' or 5'-GAT-3' motifs within gene promoters. In Arabidopsis thaliana (Mouse-ear cress), this protein is GATA transcription factor 16 (GATA16).